Consider the following 467-residue polypeptide: Cis-zeatin O-glucosyltransferase 1 (467 aa).

The active-site Proton acceptor is His-21. An anthocyanidin-binding residues include His-21 and Asn-91. Asp-127 serves as the catalytic Charge relay. Residues Ala-343, Gln-345, His-360, Trp-363, Asn-364, Ser-365, Glu-368, Asp-384, and Gln-385 each coordinate UDP-alpha-D-glucose.

Belongs to the UDP-glycosyltransferase family. As to expression, highly expressed in root. Expressed at lower level in kernel and cob. Weakly expressed in leaves. Weakly or not expressed in stems.

It catalyses the reaction cis-zeatin + UDP-alpha-D-glucose = O-beta-D-glucosyl-cis-zeatin + UDP + H(+). Functionally, utilizes UDP-glucose as the sugar donor and catalyzes the formation of O-beta-D-glucosyl-cis-zeatin from cis-zeatin. May regulate active versus storage forms of cytokinins and could have an impact on seed growth. In Zea mays (Maize), this protein is Cis-zeatin O-glucosyltransferase 1 (CISZOG1).